The sequence spans 208 residues: N-(5'-phosphoribosyl)anthranilate isomerase (208 aa).

Belongs to the TrpF family.

It carries out the reaction N-(5-phospho-beta-D-ribosyl)anthranilate = 1-(2-carboxyphenylamino)-1-deoxy-D-ribulose 5-phosphate. It participates in amino-acid biosynthesis; L-tryptophan biosynthesis; L-tryptophan from chorismate: step 3/5. The protein is N-(5'-phosphoribosyl)anthranilate isomerase of Desulforamulus reducens (strain ATCC BAA-1160 / DSM 100696 / MI-1) (Desulfotomaculum reducens).